A 56-amino-acid polypeptide reads, in one-letter code: Large ribosomal subunit protein bL32 (56 aa).

Residues 1–38 (MAVQQNKKSRSKRGMRRSHDSLSTAQLSVDATSGELHR) are disordered. Residues 7-16 (KKSRSKRGMR) are compositionally biased toward basic residues. The segment covering 21–31 (SLSTAQLSVDA) has biased composition (polar residues).

The protein belongs to the bacterial ribosomal protein bL32 family.

This is Large ribosomal subunit protein bL32 from Shewanella woodyi (strain ATCC 51908 / MS32).